The primary structure comprises 302 residues: 33 kDa chaperonin (302 aa).

2 cysteine pairs are disulfide-bonded: Cys234–Cys236 and Cys267–Cys270.

It belongs to the HSP33 family. Post-translationally, under oxidizing conditions two disulfide bonds are formed involving the reactive cysteines. Under reducing conditions zinc is bound to the reactive cysteines and the protein is inactive.

It localises to the cytoplasm. Functionally, redox regulated molecular chaperone. Protects both thermally unfolding and oxidatively damaged proteins from irreversible aggregation. Plays an important role in the bacterial defense system toward oxidative stress. The protein is 33 kDa chaperonin of Neisseria meningitidis serogroup B (strain ATCC BAA-335 / MC58).